A 316-amino-acid polypeptide reads, in one-letter code: Protoheme IX farnesyltransferase (316 aa).

The next 9 membrane-spanning stretches (helical) occupy residues 32-52 (VMSL…GHIH), 53-73 (PVLG…SGAL), 93-113 (IPAG…LSGF), 116-136 (VILG…TIFF), 152-172 (NIVI…ACVT), 180-200 (TVLF…LALF), 221-241 (VTKH…ILPS), 252-271 (LVAA…VWRM), and 289-309 (IFYL…SIFV).

This sequence belongs to the UbiA prenyltransferase family. Protoheme IX farnesyltransferase subfamily.

Its subcellular location is the cell inner membrane. The catalysed reaction is heme b + (2E,6E)-farnesyl diphosphate + H2O = Fe(II)-heme o + diphosphate. It participates in porphyrin-containing compound metabolism; heme O biosynthesis; heme O from protoheme: step 1/1. Its function is as follows. Converts heme B (protoheme IX) to heme O by substitution of the vinyl group on carbon 2 of heme B porphyrin ring with a hydroxyethyl farnesyl side group. The sequence is that of Protoheme IX farnesyltransferase from Rhizobium leguminosarum bv. trifolii (strain WSM2304).